We begin with the raw amino-acid sequence, 852 residues long: Bifunctional uridylyltransferase/uridylyl-removing enzyme (852 aa).

Residues 1-318 (MPENLSSALE…STPVRVTLRI (318 aa)) are uridylyltransferase. The segment at 319–672 (DDDYIQVNNQ…SRILPQSDSF (354 aa)) is uridylyl-removing. The region spanning 436–558 (VDDHILAVVR…VQTHERLSAL (123 aa)) is the HD domain. ACT domains lie at 673–757 (QVMV…SCNR) and 785–852 (SVEI…EQLA).

This sequence belongs to the GlnD family. Mg(2+) is required as a cofactor.

It catalyses the reaction [protein-PII]-L-tyrosine + UTP = [protein-PII]-uridylyl-L-tyrosine + diphosphate. It carries out the reaction [protein-PII]-uridylyl-L-tyrosine + H2O = [protein-PII]-L-tyrosine + UMP + H(+). With respect to regulation, uridylyltransferase (UTase) activity is inhibited by glutamine, while glutamine activates uridylyl-removing (UR) activity. Functionally, modifies, by uridylylation and deuridylylation, the PII regulatory proteins (GlnB and homologs), in response to the nitrogen status of the cell that GlnD senses through the glutamine level. Under low glutamine levels, catalyzes the conversion of the PII proteins and UTP to PII-UMP and PPi, while under higher glutamine levels, GlnD hydrolyzes PII-UMP to PII and UMP (deuridylylation). Thus, controls uridylylation state and activity of the PII proteins, and plays an important role in the regulation of nitrogen assimilation and metabolism. This Neisseria gonorrhoeae (strain ATCC 700825 / FA 1090) protein is Bifunctional uridylyltransferase/uridylyl-removing enzyme.